Here is a 71-residue protein sequence, read N- to C-terminus: Small ribosomal subunit protein bS21 (71 aa).

Residues 48–59 are compositionally biased toward basic residues; it reads KAAAAVKRHAKK. Positions 48 to 71 are disordered; the sequence is KAAAAVKRHAKKVQREQRRRERLY. A compositionally biased stretch (basic and acidic residues) spans 60-71; sequence VQREQRRRERLY.

Belongs to the bacterial ribosomal protein bS21 family.

The protein is Small ribosomal subunit protein bS21 of Azotobacter vinelandii (strain DJ / ATCC BAA-1303).